A 158-amino-acid polypeptide reads, in one-letter code: Regulator of sigma D (158 aa).

Belongs to the Rsd/AlgQ family. Interacts with RpoD.

It is found in the cytoplasm. Binds RpoD and negatively regulates RpoD-mediated transcription activation by preventing the interaction between the primary sigma factor RpoD with the catalytic core of the RNA polymerase and with promoter DNA. May be involved in replacement of the RNA polymerase sigma subunit from RpoD to RpoS during the transition from exponential growth to the stationary phase. The chain is Regulator of sigma D from Escherichia coli (strain SMS-3-5 / SECEC).